The chain runs to 411 residues: Probable tRNA pseudouridine synthase D (411 aa).

Residue Asp-81 is the Nucleophile of the active site. Residues 154–375 enclose the TRUD domain; that stretch reads GTPNFFGLQR…SGSYRPADTL (222 aa).

Belongs to the pseudouridine synthase TruD family.

The catalysed reaction is uridine(13) in tRNA = pseudouridine(13) in tRNA. Its function is as follows. Could be responsible for synthesis of pseudouridine from uracil-13 in transfer RNAs. The protein is Probable tRNA pseudouridine synthase D of Archaeoglobus fulgidus (strain ATCC 49558 / DSM 4304 / JCM 9628 / NBRC 100126 / VC-16).